A 362-amino-acid chain; its full sequence is EARP-interacting protein 1 (362 aa).

WD repeat units follow at residues 61–108, 206–246, 250–290, and 319–359; these read HPAG…RTLE, AHIH…SALT, PHAH…SEQQ, and EHED…KYAL.

This sequence belongs to the WD repeat EIPR1 family. In terms of tissue distribution, expressed in the hypodermis and the pharynx.

The protein localises to the cytoplasm. Its function is as follows. Plays a role in the trafficking of cargo to dense-core vesicles, probably through association with the endosome-associated recycling protein (EARP) complex. Important for neuronal function. The chain is EARP-interacting protein 1 from Caenorhabditis elegans.